Consider the following 189-residue polypeptide: GTPase NRas (189 aa).

Residues 10–18 (GAGGVGKSA) and 29–30 (VD) contribute to the GTP site. Residues 32 to 40 (YDPTIEDSY) carry the Effector region motif. (Microbial infection) O-linked (Glc) threonine; by P.sordellii toxin TcsL glycosylation occurs at threonine 35. 57–61 (DTAGQ) serves as a coordination point for GTP. A Phosphoserine modification is found at serine 89. Residue 116–119 (NKCD) coordinates GTP. Residues 166-185 (YRMKKLNSSDDGTQGCMGLP) form a hypervariable region region. A Glycyl lysine isopeptide (Lys-Gly) (interchain with G-Cter in ubiquitin) cross-link involves residue lysine 170. Residue cysteine 181 is the site of S-palmitoyl cysteine attachment. Cysteine 186 is lipidated: S-farnesyl cysteine. Positions 187–189 (VVM) are cleaved as a propeptide — removed in mature form.

Belongs to the small GTPase superfamily. Ras family. Interacts (active GTP-bound form preferentially) with RGS14. Interacts (active GTP-bound form) with RASSF7. Interacts (active GTP-bound form) with both SHOC2 and PP1c (all isoforms) to form a tertiary complex; SHOC2 and PP1c preferably bind M-Ras/MRAS, but they also bind K-Ras/KRAS, N-Ras/NRAS and H-Ras/HRAS. Post-translationally, palmitoylated by the ZDHHC9-GOLGA7 complex. Depalmitoylated by ABHD17A, ABHD17B and ABHD17C. A continuous cycle of de- and re-palmitoylation regulates rapid exchange between plasma membrane and Golgi. In terms of processing, acetylation at Lys-104 prevents interaction with guanine nucleotide exchange factors (GEFs). Fatty-acylated at Lys-169 and/or Lys-170. Post-translationally, ubiquitinated by the BCR(LZTR1) E3 ubiquitin ligase complex at Lys-170 in a non-degradative manner, leading to inhibit Ras signaling by decreasing Ras association with membranes. In terms of processing, phosphorylation at Ser-89 enhances NRAS association with its downstream effectors. (Microbial infection) Glucosylated at Thr-35 by P.sordellii toxin TcsL.

It localises to the cell membrane. The protein localises to the golgi apparatus membrane. The enzyme catalyses GTP + H2O = GDP + phosphate + H(+). With respect to regulation, alternates between an inactive form bound to GDP and an active form bound to GTP. Activated by a guanine nucleotide-exchange factor (GEF) and inactivated by a GTPase-activating protein (GAP). Functionally, ras proteins bind GDP/GTP and possess intrinsic GTPase activity. This chain is GTPase NRas (NRAS), found in Homo sapiens (Human).